The sequence spans 68 residues: Amphipathic peptide VmCT1 (68 aa).

The N-terminal stretch at Met1 to Ala23 is a signal peptide. Position 36 is a phenylalanine amide (Phe36). Residues Gly40–Arg68 constitute a propeptide that is removed on maturation.

The protein belongs to the non-disulfide-bridged peptide (NDBP) superfamily. Short antimicrobial peptide (group 4) family. As to expression, expressed by the venom gland.

Its subcellular location is the secreted. It localises to the target cell membrane. Functionally, cationic amphipathic peptide with antibacterial activities against both Gram-positive and Gram-negative bacteria. Also shows antifungal activities. Is mildly hemolytic against human erythrocytes. In addition, when tested in vitro on the parasite Trypanosoma cruzi (responsible of the Chagas disease), is able to reduce the number of the three forms (epimastigote, trypomastigote and amastigote). Also shows antiplasmodial and cytotoxic activity (tested on Plasmodium gallinaceum, and MCF-7 breast cancer cell line). The sequence is that of Amphipathic peptide VmCT1 from Vaejovis mexicanus smithi (Mexican scorpion).